Consider the following 388-residue polypeptide: Meiotic driver wtf13 (388 aa).

Over residues 1–29 (MKNKDYPLRSSMDELSTKNDNEIDLEKGP) the composition is skewed to basic and acidic residues. Residues 1–39 (MKNKDYPLRSSMDELSTKNDNEIDLEKGPLPEYNSEDGS) form a disordered region. A run of 9 helical transmembrane segments spans residues 89-109 (LLISVLAVIVVFFTAWVCVNP), 119-139 (AFSVTIGITCPIVFIAIFCFF), 152-172 (VTVIFLAQCVKVTAISLAQCV), 182-202 (CVKVTAVFLAKCVKVIAVGLY), 207-227 (DLVVTIWLAWVVICFILFGCV), 243-263 (CSISAALFFILLLVCIPIWTL), 267-287 (LFGLFQVLGVQSCVVIVTKGL), 297-317 (ATGYEIEASSLFVIGNFLFFY), and 331-351 (FIGNGIASFLGGLGNAFGGIG).

The protein belongs to the WTF family. Homomer. Forms protein aggregates. The two isoforms can interact with each other and with themselves. High sequence similarity is required for their interaction.

The protein resides in the spore membrane. It is found in the vacuole membrane. It localises to the ascus epiplasm. Its subcellular location is the cytoplasm. The protein localises to the endoplasmic reticulum membrane. Functionally, promotes unequal transmission of alleles from the parental zygote to progeny spores by acting as poison/antidote system where the poison and antidote proteins are produced from the same locus; the poison component is trans-acting and targets all spores within an ascus whereas the antidote component is spore-specific, leading to poisoning of all progeny that do not inherit the allele. Localizes isoform 2 to the vacuole thereby facilitating its degradation. In addition to suppressing isoform 2, also suppresses S.pombe strain FY29033 wtf18 isoform 2. In terms of biological role, forms toxic aggregates that disrupt spore maturation. This is Meiotic driver wtf13 from Schizosaccharomyces pombe (strain 972 / ATCC 24843) (Fission yeast).